We begin with the raw amino-acid sequence, 49 residues long: Large ribosomal subunit protein bL33 (49 aa).

It belongs to the bacterial ribosomal protein bL33 family.

The sequence is that of Large ribosomal subunit protein bL33 from Clostridium perfringens (strain ATCC 13124 / DSM 756 / JCM 1290 / NCIMB 6125 / NCTC 8237 / Type A).